We begin with the raw amino-acid sequence, 151 residues long: Ribosome maturation factor RimP (151 aa).

It belongs to the RimP family.

Its subcellular location is the cytoplasm. Functionally, required for maturation of 30S ribosomal subunits. The polypeptide is Ribosome maturation factor RimP (Thermoanaerobacter pseudethanolicus (strain ATCC 33223 / 39E) (Clostridium thermohydrosulfuricum)).